We begin with the raw amino-acid sequence, 667 residues long: MNETNVNNNNQSNEEVEEINDEFKLYYDGLQESKHMKYYTNSFKSYENKQHKRVSSTLVPLKSEDLQSIRINTIHILAWKLNLMAVSYNSKFIFTAESDVINVRNIDNPNIIIKTFAMDTMEMTINQIRLGILDGEEVLVSVDEGGFVRIIFVNDFEREVIRLYNHGVSTWGIAICPSKPLIAVSSNSHKITIWNLDDENPQETKFLLPKHKHNIPSIDFSPCGNYLVSVSIDKNIRIWDVNKRQLLRIQTLAQWCWACRWIDLTTKEDQLYQYYNNSSNSRDNNNNNSNSNNNGGGGIIIDKSWRGLTQHEEQQLVENNQEVEPMPEEEEEEEEEEVNQVDNDDEIFQENDDNEENEENTEFLNEANDGVDDDDDLIIQNGVFTNEDDIIFDGGLPPINQHQQQQQQNQEIEEEGQEGQEEQEDGTENENNQGTIATTTTTTTTIINSIKKLEDAINQQRIENNRINSKVPLDKNKLPSNVVFSTYQNLYLSDVEMDLLLTMNNAIPTSFPIIQTQIDRIAFLEVVPELSLVIAASQGPARLISLYRIVKQIPLNNNINNNENNNNENNDNNLNEPETNMFLESVLSPPSGGPGLIVGLSVVKNYVKNNPLAFSINLYVMYINGIFINFHIKRSTIRNKPIHQNSTFFDPINKCNIFGLDITSFGV.

WD repeat units follow at residues 165 to 204 (NHGVSTWGIAICPSKPLIAVSSNSHKITIWNLDDENPQET) and 210 to 249 (KHKHNIPSIDFSPCGNYLVSVSIDKNIRIWDVNKRQLLRI). Residues 278-293 (SSNSRDNNNNNSNSNN) show a composition bias toward low complexity. Disordered regions lie at residues 278-301 (SSNSRDNNNNNSNSNNNGGGGIII), 316-345 (LVENNQEVEPMPEEEEEEEEEEVNQVDNDD), and 389-440 (DIIF…ATTT). Positions 325–345 (PMPEEEEEEEEEEVNQVDNDD) are enriched in acidic residues. The span at 400–410 (NQHQQQQQQNQ) shows a compositional bias: low complexity. The segment covering 411–428 (EIEEEGQEGQEEQEDGTE) has biased composition (acidic residues). Residues 429 to 440 (NENNQGTIATTT) are compositionally biased toward low complexity.

The polypeptide is WD40 repeat-containing protein DDB_G0271002 (Dictyostelium discoideum (Social amoeba)).